Here is a 301-residue protein sequence, read N- to C-terminus: Vomeronasal type-1 receptor 4 (301 aa).

At 1–5 (MASRY) the chain is on the extracellular side. The helical transmembrane segment at 6–26 (VAVGMILSQTVVGVLGSFSVL) threads the bilayer. Residues 27-48 (LHYLSFYCTGCRLRSTDLIVKH) lie on the Cytoplasmic side of the membrane. A helical membrane pass occupies residues 49-69 (LIVANFLALRCKGVPQTMAAF). Residues 70–88 (GVRYFLNALGCKLVFYLHR) lie on the Extracellular side of the membrane. A helical membrane pass occupies residues 89 to 109 (VGRGVSIGTTCLLSVFQVITV). Topologically, residues 110–126 (SSRKSRWAKLKEKAPKH) are cytoplasmic. The helical transmembrane segment at 127–147 (VGFSVLLCWIVCMLVNIIFPM) threads the bilayer. At 148–185 (YVTGKWNYTNITVNEDLGYCSGGGNNKIAQTLRAMLLS) the chain is on the extracellular side. N-linked (GlcNAc...) asparagine glycans are attached at residues Asn154 and Asn157. Residues 186-206 (FPDVLCLGLMLWVSSSMVCIL) traverse the membrane as a helical segment. Residues 207 to 234 (HRHKQRVQHIDRSNLSPRASPENRATQS) lie on the Cytoplasmic side of the membrane. A helical transmembrane segment spans residues 235–255 (ILILVSTFVSSYTLSCLFQVC). Residues 256–264 (MALLDNPNS) are Extracellular-facing. Residues 265–285 (LLVNTSALMSVCFPTLSPFVL) traverse the membrane as a helical segment. Residues 286–301 (MSCDPSVYRFCFAWKR) are Cytoplasmic-facing.

Belongs to the G-protein coupled receptor 1 family.

Its subcellular location is the cell membrane. In terms of biological role, putative pheromone receptor. The polypeptide is Vomeronasal type-1 receptor 4 (VN1R4) (Homo sapiens (Human)).